The chain runs to 398 residues: Nonsense-mediated decay protein 4 (398 aa).

The tract at residues 327–355 (PVTSNYRGKNNRGRNNRGRRGNKRRERER) is disordered. The span at 335-350 (KNNRGRNNRGRRGNKR) shows a compositional bias: basic residues.

It localises to the cytoplasm. Involved in nonsense-mediated decay of mRNAs containing premature stop codons. In Candida albicans (strain SC5314 / ATCC MYA-2876) (Yeast), this protein is Nonsense-mediated decay protein 4 (NMD4).